The primary structure comprises 95 residues: Aspartyl/glutamyl-tRNA(Asn/Gln) amidotransferase subunit C (95 aa).

This sequence belongs to the GatC family. Heterotrimer of A, B and C subunits.

It catalyses the reaction L-glutamyl-tRNA(Gln) + L-glutamine + ATP + H2O = L-glutaminyl-tRNA(Gln) + L-glutamate + ADP + phosphate + H(+). The catalysed reaction is L-aspartyl-tRNA(Asn) + L-glutamine + ATP + H2O = L-asparaginyl-tRNA(Asn) + L-glutamate + ADP + phosphate + 2 H(+). In terms of biological role, allows the formation of correctly charged Asn-tRNA(Asn) or Gln-tRNA(Gln) through the transamidation of misacylated Asp-tRNA(Asn) or Glu-tRNA(Gln) in organisms which lack either or both of asparaginyl-tRNA or glutaminyl-tRNA synthetases. The reaction takes place in the presence of glutamine and ATP through an activated phospho-Asp-tRNA(Asn) or phospho-Glu-tRNA(Gln). In Azorhizobium caulinodans (strain ATCC 43989 / DSM 5975 / JCM 20966 / LMG 6465 / NBRC 14845 / NCIMB 13405 / ORS 571), this protein is Aspartyl/glutamyl-tRNA(Asn/Gln) amidotransferase subunit C.